A 346-amino-acid chain; its full sequence is Phosphoribosylformylglycinamidine cyclo-ligase (346 aa).

This sequence belongs to the AIR synthase family.

It is found in the cytoplasm. It carries out the reaction 2-formamido-N(1)-(5-O-phospho-beta-D-ribosyl)acetamidine + ATP = 5-amino-1-(5-phospho-beta-D-ribosyl)imidazole + ADP + phosphate + H(+). Its pathway is purine metabolism; IMP biosynthesis via de novo pathway; 5-amino-1-(5-phospho-D-ribosyl)imidazole from N(2)-formyl-N(1)-(5-phospho-D-ribosyl)glycinamide: step 2/2. This chain is Phosphoribosylformylglycinamidine cyclo-ligase, found in Geobacillus kaustophilus (strain HTA426).